Consider the following 527-residue polypeptide: Zinc finger imprinted 2 (527 aa).

Positions 1–16 (MYQPEDDNNSDVTSDD) are enriched in acidic residues. The tract at residues 1–104 (MYQPEDDNNS…SRSQDAESYQ (104 aa)) is disordered. Basic and acidic residues-rich tracts occupy residues 17–26 (DMTRNRRESS), 35–56 (SGDR…DRWS), and 80–99 (FEMD…RSQD). A KRAB domain is found at 176–246 (VTFEDVLVDF…ETDSRHTVIC (71 aa)). The disordered stretch occupies residues 247-322 (QGESHDDPLE…GICTSPQSAS (76 aa)). The span at 259-275 (QGNQEKLLTPITMNDPK) shows a compositional bias: polar residues. Basic and acidic residues predominate over residues 297 to 307 (QSKDPLGKDPQ). C2H2-type zinc fingers lie at residues 328–350 (NRCE…ERIH), 356–378 (YECK…QKTH), 412–434 (FECF…LKAH), 466–488 (CQCC…YRTH), and 494–516 (YQCQ…YQLH).

The protein belongs to the krueppel C2H2-type zinc-finger protein family. Highest levels of expression in adult testis; modest levels in fetal kidney and brain.

The protein resides in the nucleus. May be involved in transcriptional regulation. The protein is Zinc finger imprinted 2 (ZIM2) of Homo sapiens (Human).